Consider the following 92-residue polypeptide: Small ribosomal subunit protein uS19 (92 aa).

Belongs to the universal ribosomal protein uS19 family.

Functionally, protein S19 forms a complex with S13 that binds strongly to the 16S ribosomal RNA. This chain is Small ribosomal subunit protein uS19, found in Crocosphaera subtropica (strain ATCC 51142 / BH68) (Cyanothece sp. (strain ATCC 51142)).